The sequence spans 110 residues: Thiosulfate sulfurtransferase GlpE (110 aa).

The Rhodanese domain maps to 17–105 (RENGAQVVDI…WRSVYPADTS (89 aa)). The active-site Cysteine persulfide intermediate is the C65.

The protein belongs to the GlpE family.

It localises to the cytoplasm. It catalyses the reaction thiosulfate + hydrogen cyanide = thiocyanate + sulfite + 2 H(+). The catalysed reaction is thiosulfate + [thioredoxin]-dithiol = [thioredoxin]-disulfide + hydrogen sulfide + sulfite + 2 H(+). In terms of biological role, transferase that catalyzes the transfer of sulfur from thiosulfate to thiophilic acceptors such as cyanide or dithiols. May function in a CysM-independent thiosulfate assimilation pathway by catalyzing the conversion of thiosulfate to sulfite, which can then be used for L-cysteine biosynthesis. This chain is Thiosulfate sulfurtransferase GlpE, found in Pseudomonas paraeruginosa (strain DSM 24068 / PA7) (Pseudomonas aeruginosa (strain PA7)).